The chain runs to 417 residues: Serine hydroxymethyltransferase (417 aa).

(6S)-5,6,7,8-tetrahydrofolate is bound by residues L122 and 126–128; that span reads GHL. An N6-(pyridoxal phosphate)lysine modification is found at K230. Position 355-357 (355-357) interacts with (6S)-5,6,7,8-tetrahydrofolate; sequence SPF.

This sequence belongs to the SHMT family. In terms of assembly, homodimer. The cofactor is pyridoxal 5'-phosphate.

Its subcellular location is the cytoplasm. The enzyme catalyses (6R)-5,10-methylene-5,6,7,8-tetrahydrofolate + glycine + H2O = (6S)-5,6,7,8-tetrahydrofolate + L-serine. Its pathway is one-carbon metabolism; tetrahydrofolate interconversion. The protein operates within amino-acid biosynthesis; glycine biosynthesis; glycine from L-serine: step 1/1. Functionally, catalyzes the reversible interconversion of serine and glycine with tetrahydrofolate (THF) serving as the one-carbon carrier. This reaction serves as the major source of one-carbon groups required for the biosynthesis of purines, thymidylate, methionine, and other important biomolecules. Also exhibits THF-independent aldolase activity toward beta-hydroxyamino acids, producing glycine and aldehydes, via a retro-aldol mechanism. This Francisella philomiragia subsp. philomiragia (strain ATCC 25017 / CCUG 19701 / FSC 153 / O#319-036) protein is Serine hydroxymethyltransferase.